We begin with the raw amino-acid sequence, 391 residues long: Tyrosinase-like protein phomQ2 (391 aa).

Residues 1–21 (MDNVGCEASSSRDPKGKKAVG) form a disordered region. The chain crosses the membrane as a helical span at residues 61 to 81 (IRGFICATIIFVVCLGALSYI). Residues Asn-97 and Asn-141 are each glycosylated (N-linked (GlcNAc...) asparagine). His-160 and His-169 together coordinate Cu cation. Asn-204, Asn-246, and Asn-261 each carry an N-linked (GlcNAc...) asparagine glycan. 2 residues coordinate Cu cation: His-298 and His-324. N-linked (GlcNAc...) asparagine glycosylation occurs at Asn-353.

This sequence belongs to the tyrosinase family. Requires Cu(2+) as cofactor.

It is found in the membrane. Its pathway is mycotoxin biosynthesis. Tyrosinase-like protein; part of the gene cluster that mediates the biosynthesis of the phomopsins, a group of hexapeptide mycotoxins which infects lupins and causes lupinosis disease in livestock. Within the pathway, phomQ2 is involved in the generation of the common 13-membered macrocycle, possibly by catalyzing the hydroxylation of Tyr. The pathway starts with the processing of the precursor phomA by several endopeptidases including kexin proteases as well as the cluster-specific S41 family peptidase phomP1 and the oligopeptidase phomG to produce 10 identical copies of the hexapeptide Tyr-Val-Ile-Pro-Ile-Asp. After being excised from the precursor peptide, the core peptides are cyclized and modified post-translationally by enzymes encoded within the gene cluster. The timing and order of proteolysis of the phomA precursor and PTMs are still unknown. Two tyrosinase-like enzymes, phomQ1 and phomQ2, catalyze the chlorination and hydroxylation of Tyr, respectively. PhomYb, is proposed to be involved in the construction of the macrocyclic structure. The other 4 ustYa family proteins may be involved in PTMs that generate the unique structure of phomopsin A. PhomYa is required for the hydroxylation of C-beta of Tyr. PhomYc, phomYd, and phomYe are responsible for the biosynthesis of 2,3-dehydroisoleucine (dIle), 2,3-dehydroaspartic acid (dAsp), and 3,4-dehydroproline (dPro), respectively. While dIle formation by phomYc is indispensable for the installation of dAsp by phomYd, the order of the other PTMs have not been elucidated yet. Most of the biosynthetic enzymes likely have broad substrate specificity, and thus, there might be a metabolic grid from a precursor to phomopsin A. The enzyme(s) responsible for the biosynthesis of 3,4-dehydrovaline (dVal) have also not been identified yet. Finally, phomM acts as an S-adenosylmethionine-dependent alpha-N-methyltransferase that catalyzes two successive N-methylation reactions, converting N-desmethyl-phomopsin A to phomopsin A and phomopsin A further to an N,N-dimethylated congener called phomopsin E. This is Tyrosinase-like protein phomQ2 from Diaporthe leptostromiformis (Lupinosis disease fungus).